We begin with the raw amino-acid sequence, 501 residues long: Beta-secretase 1 (501 aa).

Residues 1–21 form the signal peptide; sequence MAQALPWLLLWMGSGVLPAHG. Residues 22 to 45 constitute a propeptide that is removed on maturation; the sequence is SQPGIRLPLRSGLGGAPLGLRLPR. Over 22 to 457 the chain is Extracellular; it reads SQPGIRLPLR…PQTDESTLMT (436 aa). Positions 39–58 are disordered; it reads LGLRLPRETDEESEEPGRRG. Positions 75 to 416 constitute a Peptidase A1 domain; it reads YYVEMTLGSP…DRARKRIGFA (342 aa). Aspartate 93 is a catalytic residue. The residue at position 126 (lysine 126) is an N6-acetyllysine. N-linked (GlcNAc...) asparagine glycosylation is found at asparagine 153, asparagine 172, and asparagine 223. 3 disulfides stabilise this stretch: cysteine 216–cysteine 420, cysteine 278–cysteine 443, and cysteine 330–cysteine 380. An N6-acetyllysine mark is found at lysine 275, lysine 279, and lysine 285. Aspartate 289 is a catalytic residue. 3 positions are modified to N6-acetyllysine: lysine 299, lysine 300, and lysine 307. The N-linked (GlcNAc...) asparagine glycan is linked to asparagine 354. A helical transmembrane segment spans residues 458–478; the sequence is IAYVMAAICALFMLPLCLMVC. 4 S-palmitoyl cysteine lipidation sites follow: cysteine 474, cysteine 478, cysteine 482, and cysteine 485. Residues 479–501 lie on the Cytoplasmic side of the membrane; the sequence is QWRCLRCLRHQHDDFADDISLLK. The segment at 479-501 is interaction with RTN3; it reads QWRCLRCLRHQHDDFADDISLLK. The DXXLL signature appears at 496-500; sequence DISLL. Serine 498 carries the post-translational modification Phosphoserine. A Glycyl lysine isopeptide (Lys-Gly) (interchain with G-Cter in ubiquitin) cross-link involves residue lysine 501.

This sequence belongs to the peptidase A1 family. In terms of assembly, monomer. Interacts (via DXXLL motif) with GGA1, GGA2 and GGA3 (via their VHS domain); the interaction highly increases when BACE1 is phosphorylated at Ser-498. Interacts with RTN1; RTN2; RTN3 and RTN4; the interaction leads to inhibition of amyloid precursor protein processing. Interacts with SNX6. Interacts with PCSK9. Interacts with NAT8 and NAT8B. Interacts with BIN1. Interacts (via extracellular domain) with ADAM10 (via extracellular domain). Interacts with SORL1; this interaction may affect binding with APP and hence reduce APP cleavage. Interacts with NRDC AND NRG1. Palmitoylation mediates lipid raft localization. Post-translationally, acetylated in the endoplasmic reticulum at Lys-126, Lys-275, Lys-279, Lys-285, Lys-299, Lys-300 and Lys-307. Acetylation by NAT8 and NAT8B is transient and deacetylation probably occurs in the Golgi. Acetylation regulates the maturation, the transport to the plasma membrane, the stability and the expression of the protein. In terms of processing, ubiquitinated at Lys-501, ubiquitination leads to lysosomal degradation. Monoubiquitinated and 'Lys-63'-linked polyubitinated. Deubiquitnated by USP8; inhibits lysosomal degradation. Phosphorylation at Ser-498 is required for interaction with GGA1 and retrograded transport from endosomal compartments to the trans-Golgi network. Non-phosphorylated BACE1 enters a direct recycling route to the cell surface. Post-translationally, N-Glycosylated. Addition of a bisecting N-acetylglucosamine by MGAT3 blocks lysosomal targeting, further degradation and is required for maintaining stability under stress conditions.

It localises to the cell membrane. It is found in the golgi apparatus. Its subcellular location is the trans-Golgi network. The protein resides in the endoplasmic reticulum. The protein localises to the endosome. It localises to the cell surface. It is found in the cytoplasmic vesicle membrane. Its subcellular location is the membrane raft. The protein resides in the lysosome. The protein localises to the late endosome. It localises to the early endosome. It is found in the recycling endosome. Its subcellular location is the cell projection. The protein resides in the axon. The protein localises to the dendrite. The enzyme catalyses Broad endopeptidase specificity. Cleaves Glu-Val-Asn-Leu-|-Asp-Ala-Glu-Phe in the Swedish variant of Alzheimer's amyloid precursor protein.. Its activity is regulated as follows. Inhibited by RTN3 and RTN4. Its function is as follows. Responsible for the proteolytic processing of the amyloid precursor protein (APP). Cleaves at the N-terminus of the A-beta peptide sequence, between residues 671 and 672 of APP, leads to the generation and extracellular release of beta-cleaved soluble APP, and a corresponding cell-associated C-terminal fragment which is later released by gamma-secretase. Cleaves CHL1. In Bos taurus (Bovine), this protein is Beta-secretase 1 (BACE1).